The chain runs to 365 residues: DNA replication and repair protein RecF (365 aa).

Position 30-37 (30-37) interacts with ATP; that stretch reads GPNGSGKT.

This sequence belongs to the RecF family.

The protein localises to the cytoplasm. In terms of biological role, the RecF protein is involved in DNA metabolism; it is required for DNA replication and normal SOS inducibility. RecF binds preferentially to single-stranded, linear DNA. It also seems to bind ATP. In Azotobacter vinelandii (strain DJ / ATCC BAA-1303), this protein is DNA replication and repair protein RecF.